The sequence spans 284 residues: Serine protease 57 (284 aa).

Residues 1 to 35 (MPSSTAMVPGTRGGWHCLVLTTAAALTQLMWLPGC) form the signal peptide. The 230-residue stretch at 40 to 269 (IVGGHEVTPH…FVTWIWDVVR (230 aa)) folds into the Peptidase S1 domain. Cys-65 and Cys-81 are oxidised to a cystine. Active-site charge relay system residues include His-80 and Asp-128. N-linked (GlcNAc...) asparagine glycosylation occurs at Asn-135. Disulfide bonds link Cys-163-Cys-230, Cys-194-Cys-208, and Cys-220-Cys-245. Ser-224 acts as the Charge relay system in catalysis.

It belongs to the peptidase S1 family. After cleavage of the signal peptide, the N-terminus is probably further processed by CTSC. Processing by CTSC is probably required for accumulation in cytoplasmic granules; in the absence of CTSC the protein does not accumulate. Post-translationally, N-glycosylated.

It localises to the cytoplasmic granule lumen. It is found in the secreted. Its function is as follows. Serine protease that cleaves preferentially after Arg residues. Can also cleave after citrulline (deimidated arginine) and methylarginine residues. This chain is Serine protease 57 (Prss57), found in Mus musculus (Mouse).